A 217-amino-acid chain; its full sequence is Methylthioribulose-1-phosphate dehydratase (217 aa).

Zn(2+) is bound by residues His106 and His108.

This sequence belongs to the aldolase class II family. MtnB subfamily. The cofactor is Zn(2+).

It carries out the reaction 5-(methylsulfanyl)-D-ribulose 1-phosphate = 5-methylsulfanyl-2,3-dioxopentyl phosphate + H2O. It participates in amino-acid biosynthesis; L-methionine biosynthesis via salvage pathway; L-methionine from S-methyl-5-thio-alpha-D-ribose 1-phosphate: step 2/6. Its function is as follows. Catalyzes the dehydration of methylthioribulose-1-phosphate (MTRu-1-P) into 2,3-diketo-5-methylthiopentyl-1-phosphate (DK-MTP-1-P). In Xanthomonas campestris pv. campestris (strain B100), this protein is Methylthioribulose-1-phosphate dehydratase.